A 283-amino-acid polypeptide reads, in one-letter code: Aldo-keto reductase MSMEG_2407/MSMEI_2346 (283 aa).

Y58 acts as the Proton donor in catalysis. NADPH contacts are provided by G196, L198, V200, I236, R238, S239, A240, R244, S247, N248, and R274.

It belongs to the aldo/keto reductase family. In terms of assembly, monomer.

Inhibited by the antituberculosis drug isoniazid (INH). In terms of biological role, catalyzes the NADPH-dependent reduction of dicarbonyls. Exhibits narrow substrate specificity, with preferential activity against the dicarbonyl substrates phenylglyoxal and methylglyoxal. Exhibits weak activity with ethyl-2-methyl acetoacetate. Cannot use NADH. May play an important role in the detoxification of methylglyoxal. This chain is Aldo-keto reductase MSMEG_2407/MSMEI_2346, found in Mycolicibacterium smegmatis (strain ATCC 700084 / mc(2)155) (Mycobacterium smegmatis).